A 146-amino-acid polypeptide reads, in one-letter code: Putative pre-16S rRNA nuclease (146 aa).

Belongs to the YqgF nuclease family.

It localises to the cytoplasm. Could be a nuclease involved in processing of the 5'-end of pre-16S rRNA. The polypeptide is Putative pre-16S rRNA nuclease (Burkholderia mallei (strain SAVP1)).